A 328-amino-acid polypeptide reads, in one-letter code: Coiled-coil domain-containing protein 54 (328 aa).

Positions 93–148 (KIQEKTDFFQKQMQVLETKMNVNENKQCATAEDIFSVKEDVDALKKKVTELGNQNS) form a coiled coil. Phosphothreonine is present on T182.

The chain is Coiled-coil domain-containing protein 54 (CCDC54) from Bos taurus (Bovine).